The primary structure comprises 520 residues: MKTTKGGKVMNPTDAYRKQIRKREIKRNKKERQKVREVGILKKDPEQIKDQIRKLDMSKAEGALDKARKHKKRQLEDTLKMVVKKRKEYDEKKKEQGEATTSVMFSHLPPQRRLTGEEDLKPEDSVYYHPTLNPTGAPPPGKPPMYNSSIGLAISSDGASSSSAALSSITESEDSVLVNPPPLPPLPDGDNALSASLPLPPLPPLPPTTGLTLPHSPFPPPPPGPPPKEQDFVRPPLPPPPQLPQSSQPPPPGLSGSQGDGRFPESSDFTFDNRMNANITSVPLLPPPGIPSNESESRPAESNASSFQNANLSKMVAPPPPAPLHQQHQSTFAGAAASLTNFQPDVHPPPGMLRFPPPPPPLDMHPPHPGMFVGHLIPRPPYGPPPGPPPMMRPPLPPGPPPSSFQDGQAMIRPYVPNKPSFVKSAAPTVVRRPLAQHTPELTSMVPASVRVRRESATVTKPKPKTSIASSLSFTPRAMASAATVKVEPAKTSAASKPQSIDDSYTAFLEDMKALGALDG.

3 short sequence motifs (nuclear localization signal) span residues 16-23 (YRKQIRKR), 52-59 (IRKLDMSK), and 71-78 (KKRQLEDT). Residues 83–410 (VKKRKEYDEK…PPSSFQDGQA (328 aa)) are disordered. Composition is skewed to basic and acidic residues over residues 87 to 97 (KEYDEKKKEQG) and 114 to 126 (LTGE…EDSV). The span at 148–168 (SSIGLAISSDGASSSSAALSS) shows a compositional bias: low complexity. 3 stretches are compositionally biased toward pro residues: residues 198–207 (PLPPLPPLPP), 216–227 (SPFPPPPPGPPP), and 235–253 (PPLP…PPPG). Polar residues-rich tracts occupy residues 267 to 281 (SDFT…NITS), 300 to 312 (AESN…NANL), and 326 to 343 (QQHQ…TNFQ). 2 stretches are compositionally biased toward pro residues: residues 346 to 369 (VHPP…PPHP) and 378 to 403 (PRPP…PPPS).

As to expression, in seedlings, mostly expressed in the shoot apical meristem (SAM) and root tip.

It localises to the nucleus. Functionally, involved in the regulation of flowering time in both long and short days. The sequence is that of Protein EARLY FLOWERING 5 from Arabidopsis thaliana (Mouse-ear cress).